A 241-amino-acid chain; its full sequence is Ribonuclease PH (241 aa).

Phosphate is bound by residues Arg89 and 127-129; that span reads GTR.

This sequence belongs to the RNase PH family. Homohexameric ring arranged as a trimer of dimers.

The catalysed reaction is tRNA(n+1) + phosphate = tRNA(n) + a ribonucleoside 5'-diphosphate. Phosphorolytic 3'-5' exoribonuclease that plays an important role in tRNA 3'-end maturation. Removes nucleotide residues following the 3'-CCA terminus of tRNAs; can also add nucleotides to the ends of RNA molecules by using nucleoside diphosphates as substrates, but this may not be physiologically important. Probably plays a role in initiation of 16S rRNA degradation (leading to ribosome degradation) during starvation. This chain is Ribonuclease PH, found in Xanthomonas oryzae pv. oryzae (strain MAFF 311018).